Consider the following 141-residue polypeptide: Protein Turandot Z (141 aa).

Positions 1–23 (MYFAIRLSFVLAVLFCLTGNGNA) are cleaved as a signal peptide.

This sequence belongs to the Turandot family.

It is found in the secreted. Its function is as follows. A humoral factor that may play a role in stress tolerance. The sequence is that of Protein Turandot Z from Drosophila yakuba (Fruit fly).